The following is a 366-amino-acid chain: MKQSPLHRPSRPLLALGIEGSANKLGCGIISHSPSPTGGPTLVMVLSNVRHTYITPPGEGFLPSDTARHHREWVVKVIEEAVRKAGVRMGDLDCIAFTKGPGMGTPLQVGALVARTLSLLHNIPLVGVNHCVGHIEMGRQITSSHNPIVLYVSGGNTQVIAYSQQRYRIFGETLDIAIGNCLDRFARVIGLRNDPSPGYNIEKEAKKGKRLVQLPYGTKGMDVSLAGILHSVEAYTKDKRYRSWDQVNDVEEDIITPYDLCFSLQETTFAMLVEITERAMAHVGAKDVLIVGGVGCNLRLQEMMGIMASERGGRVFATDESFCIDNGIMIAQAGLLAFRMGNTMPLEKTGVTQRYRTDAVHVAWRA.

A divalent metal cation-binding residues include His-130, His-134, and Tyr-151. Substrate contacts are provided by residues 151-155 (YVSGG), Asp-183, Gly-198, Glu-202, and Asn-297. Asp-325 contributes to the a divalent metal cation binding site.

It belongs to the KAE1 / TsaD family. Component of the EKC/KEOPS complex composed of at least BUD32, CGI121, GON7, KAE1 and PCC1; the whole complex dimerizes. A divalent metal cation serves as cofactor.

It is found in the cytoplasm. The protein localises to the nucleus. It carries out the reaction L-threonylcarbamoyladenylate + adenosine(37) in tRNA = N(6)-L-threonylcarbamoyladenosine(37) in tRNA + AMP + H(+). In terms of biological role, component of the EKC/KEOPS complex that is required for the formation of a threonylcarbamoyl group on adenosine at position 37 (t(6)A37) in tRNAs that read codons beginning with adenine. The complex is probably involved in the transfer of the threonylcarbamoyl moiety of threonylcarbamoyl-AMP (TC-AMP) to the N6 group of A37. KAE1 likely plays a direct catalytic role in this reaction, but requires other protein(s) of the complex to fulfill this activity. The EKC/KEOPS complex also promotes both telomere uncapping and telomere elongation. The complex is required for efficient recruitment of transcriptional coactivators. In Cryptococcus neoformans var. neoformans serotype D (strain JEC21 / ATCC MYA-565) (Filobasidiella neoformans), this protein is tRNA N6-adenosine threonylcarbamoyltransferase.